We begin with the raw amino-acid sequence, 333 residues long: Fructose-1,6-bisphosphatase class 1 (333 aa).

Positions 92, 113, 115, and 116 each coordinate Mg(2+). Substrate contacts are provided by residues 116-119, Asn-209, Tyr-242, and Lys-272; that span reads DGSS. Glu-278 contributes to the Mg(2+) binding site.

It belongs to the FBPase class 1 family. As to quaternary structure, homotetramer. Mg(2+) is required as a cofactor.

The protein resides in the cytoplasm. It catalyses the reaction beta-D-fructose 1,6-bisphosphate + H2O = beta-D-fructose 6-phosphate + phosphate. It functions in the pathway carbohydrate biosynthesis; Calvin cycle. In Chlorobium phaeovibrioides (strain DSM 265 / 1930) (Prosthecochloris vibrioformis (strain DSM 265)), this protein is Fructose-1,6-bisphosphatase class 1.